The primary structure comprises 313 residues: Formimidoylglutamase (313 aa).

Residues histidine 130, aspartate 155, histidine 157, aspartate 159, aspartate 241, and aspartate 243 each contribute to the Mn(2+) site.

The protein belongs to the arginase family. The cofactor is Mn(2+).

The catalysed reaction is N-formimidoyl-L-glutamate + H2O = formamide + L-glutamate. It functions in the pathway amino-acid degradation; L-histidine degradation into L-glutamate; L-glutamate from N-formimidoyl-L-glutamate (hydrolase route): step 1/1. Functionally, catalyzes the conversion of N-formimidoyl-L-glutamate to L-glutamate and formamide. This is Formimidoylglutamase from Salmonella paratyphi A (strain ATCC 9150 / SARB42).